Here is a 383-residue protein sequence, read N- to C-terminus: Probable cell wall hydrolase LytN (383 aa).

A signal peptide spans 1-49 (MFVYYCKECFIMNKQQSKVRYSIRKVSIGILSISIGMFLALGMSNKAYA). One can recognise a LysM domain in the interval 175–219 (QIYTVKKGDTLSAIALKYKTTVSNIQNTNNIANPNLIFIGQKLKV). One can recognise a Peptidase C51 domain in the interval 241–378 (NSSTLNYLKT…NYENDMIFIR (138 aa)).

It localises to the secreted. Its function is as follows. Probably involved in peptidoglycan hydrolysis. The polypeptide is Probable cell wall hydrolase LytN (lytN) (Staphylococcus aureus (strain NCTC 8325 / PS 47)).